A 253-amino-acid polypeptide reads, in one-letter code: 5'-nucleotidase SurE (253 aa).

Asp8, Asp9, Ser39, and Asn91 together coordinate a divalent metal cation.

Belongs to the SurE nucleotidase family. It depends on a divalent metal cation as a cofactor.

The protein resides in the cytoplasm. The catalysed reaction is a ribonucleoside 5'-phosphate + H2O = a ribonucleoside + phosphate. Its function is as follows. Nucleotidase that shows phosphatase activity on nucleoside 5'-monophosphates. The protein is 5'-nucleotidase SurE of Albidiferax ferrireducens (strain ATCC BAA-621 / DSM 15236 / T118) (Rhodoferax ferrireducens).